Reading from the N-terminus, the 1120-residue chain is Transcriptional repressor NF-X1 (1120 aa).

The segment at 9–26 is interaction with PABPC1 and PABC4; sequence GTFKFNTDAAEFIPQEKK. Residues 22 to 295 form a disordered region; sequence PQEKKNSGLN…LNERPAKSTC (274 aa). S50, S82, and S95 each carry phosphoserine. Residues 73–106 are compositionally biased toward polar residues; that stretch reads YHPSGSKPKSQQTSFQSSPCNKSPKSHGLQNQPW. Residues 111 to 120 show a composition bias toward basic residues; it reads NEKHHIRVKK. Positions 124–141 are enriched in polar residues; the sequence is LAEQTSDTAGLESSTRSE. Residues S129 and S150 each carry the phosphoserine modification. Basic and acidic residues-rich tracts occupy residues 142–159, 188–202, 222–254, and 282–291; these read SGTD…KEVV, LKCE…KPED, SSRK…EGAR, and PKDDLNERPA. S326 is subject to Phosphoserine. An RING-type; atypical zinc finger spans residues 358 to 409; that stretch reads CMVCCELVRVTAPVWSCQSCYHVFHLNCIKKWARSPASQADGQSGWRCPACQ. NF-X1-type zinc fingers lie at residues 453–471, 506–525, 567–586, 632–655, 694–713, 721–740, 832–854, and 863–884; these read CPHS…PCPA, CGQH…PCQI, CGNH…QCPR, CGSL…PCSR, CGRH…KCPL, CGLH…TCWQ, CGMH…PCKQ, and CGHP…ACKA. The region spanning 994-1062 is the R3H domain; it reads LKFVSDVEKE…KRNVVVTAIR (69 aa). Residues 1081 to 1109 form a disordered region; the sequence is QARPPPPIPHHRHQSDKNPGSSNLQKITK. Residues 1097–1106 are compositionally biased toward polar residues; the sequence is KNPGSSNLQK.

The protein belongs to the NFX1 family. In terms of assembly, isoform 1 interacts with PABPC1 and PABPC4. (Microbial infection) Isoform 1 and isoform 3 interact with human papillomavirus (HPV) type-16 E6 oncoprotein. Isoform 3 is polyubiquitinated in the presence of HPV16 E6 protein; which leads to proteasomal degradation. Isoform 1 is not polyubiquitinated.

The protein resides in the nucleus. Binds to the X-box motif of MHC class II genes and represses their expression. May play an important role in regulating the duration of an inflammatory response by limiting the period in which MHC class II molecules are induced by interferon-gamma. Isoform 3 binds to the X-box motif of TERT promoter and represses its expression. Together with PABPC1 or PABPC4, isoform 1 acts as a coactivator for TERT expression. Mediates E2-dependent ubiquitination. The protein is Transcriptional repressor NF-X1 (NFX1) of Homo sapiens (Human).